Here is a 169-residue protein sequence, read N- to C-terminus: Ureidoglycolate lyase (169 aa).

It belongs to the ureidoglycolate lyase family. Homodimer. Requires Ni(2+) as cofactor.

It catalyses the reaction (S)-ureidoglycolate = urea + glyoxylate. It functions in the pathway nitrogen metabolism; (S)-allantoin degradation. Functionally, catalyzes the catabolism of the allantoin degradation intermediate (S)-ureidoglycolate, generating urea and glyoxylate. Involved in the utilization of allantoin as nitrogen source. In Brucella melitensis biotype 2 (strain ATCC 23457), this protein is Ureidoglycolate lyase.